Consider the following 405-residue polypeptide: Palmitoyltransferase PFA5 (405 aa).

A run of 5 helical transmembrane segments spans residues 12–32 (YIKLLVPICVVLVLAYLNYAI), 51–71 (IILWVLLGFFQLELLVYWVLI), 154–174 (LFFMKFMMGFLAFFIIVLIYC), 191–211 (FIVLFVMSGFWIIMIGCLFGI), and 310–330 (FYTLWRLAAAFVVFIIPFIDI). Residues 111–161 (YYCSNSNSIKLERSFFSKDVGYNVIKFDHYCIWIGQPIGQDNYLFFMKFMM) enclose the DHHC domain.

The protein belongs to the DHHC palmitoyltransferase family. PFA5 subfamily. In terms of processing, autopalmitoylated.

Its subcellular location is the membrane. It carries out the reaction L-cysteinyl-[protein] + hexadecanoyl-CoA = S-hexadecanoyl-L-cysteinyl-[protein] + CoA. The sequence is that of Palmitoyltransferase PFA5 (PFA5) from Candida albicans (strain SC5314 / ATCC MYA-2876) (Yeast).